A 409-amino-acid polypeptide reads, in one-letter code: Shaggy-related protein kinase gamma (409 aa).

Ala-2 bears the N-acetylalanine mark. In terms of domain architecture, Protein kinase spans 73–357 (YMAERVVGHG…ALDSLVHPFF (285 aa)). ATP-binding positions include 79-87 (VGHGSFGVV) and Lys-102. Residue Asp-198 is the Proton acceptor of the active site. At Tyr-233 the chain carries Phosphotyrosine.

The protein belongs to the protein kinase superfamily. CMGC Ser/Thr protein kinase family. GSK-3 subfamily. Binds to KIB1. Component of a complex made of POLAR, BASL, ASK7/BIN2 and ASK3/SK12. Binds to POLAR and BASL. In terms of processing, autophosphorylated mainly on threonine and serine residues. As to expression, roots, shoots and leaves.

It localises to the cytoplasm. The protein localises to the cell cortex. The catalysed reaction is L-seryl-[protein] + ATP = O-phospho-L-seryl-[protein] + ADP + H(+). The enzyme catalyses L-threonyl-[protein] + ATP = O-phospho-L-threonyl-[protein] + ADP + H(+). May mediate extracellular signals to regulate transcription in differentiating cells. Probably involved first at the cortical polarity site, to restrict MAPK signaling and promote asymmetric cell division (ACD), and second in the nucleus of stomatal lineage ground cells (SLGCs) or meristemoids, to limit cell division and to promote differentiation into pavement or stomatal guard cells, respectively. Phosphorylate YDA and SPCH in vitro. This Arabidopsis thaliana (Mouse-ear cress) protein is Shaggy-related protein kinase gamma.